The following is a 730-amino-acid chain: Aspyridones cluster regulator apdR (730 aa).

A DNA-binding region (zn(2)-C6 fungal-type) is located at residues 20 to 46 (CTECRRRKIRCDQATPCRHCEKAALRC).

The protein localises to the nucleus. Functionally, transcription factor involved in regulation of gene cluster that mediates the biosynthesis of aspyridones. This Emericella nidulans (strain FGSC A4 / ATCC 38163 / CBS 112.46 / NRRL 194 / M139) (Aspergillus nidulans) protein is Aspyridones cluster regulator apdR.